Here is a 502-residue protein sequence, read N- to C-terminus: Glycerol kinase (502 aa).

An ADP-binding site is contributed by threonine 15. Positions 15, 16, and 17 each coordinate ATP. Sn-glycerol 3-phosphate is bound at residue threonine 15. Arginine 19 lines the ADP pocket. The sn-glycerol 3-phosphate site is built by arginine 85, glutamate 86, and tyrosine 137. The glycerol site is built by arginine 85, glutamate 86, and tyrosine 137. Residue histidine 233 is modified to Phosphohistidine; by HPr. Residue aspartate 247 coordinates sn-glycerol 3-phosphate. Residues aspartate 247 and glutamine 248 each contribute to the glycerol site. 2 residues coordinate ADP: threonine 269 and glycine 312. Positions 269, 312, 316, and 413 each coordinate ATP. ADP is bound by residues glycine 413 and asparagine 417.

This sequence belongs to the FGGY kinase family. In terms of assembly, homotetramer and homodimer (in equilibrium). The phosphoenolpyruvate-dependent sugar phosphotransferase system (PTS), including enzyme I, and histidine-containing protein (HPr) are required for the phosphorylation, which leads to the activation of the enzyme.

The enzyme catalyses glycerol + ATP = sn-glycerol 3-phosphate + ADP + H(+). Its pathway is polyol metabolism; glycerol degradation via glycerol kinase pathway; sn-glycerol 3-phosphate from glycerol: step 1/1. With respect to regulation, activated by phosphorylation and inhibited by fructose 1,6-bisphosphate (FBP). Functionally, key enzyme in the regulation of glycerol uptake and metabolism. Catalyzes the phosphorylation of glycerol to yield sn-glycerol 3-phosphate. The chain is Glycerol kinase from Streptococcus agalactiae serotype Ia (strain ATCC 27591 / A909 / CDC SS700).